The sequence spans 220 residues: uncharacterized protein (220 aa).

The next 7 membrane-spanning stretches (helical) occupy residues 6 to 26 (FSILVDFAAGGLVLASVLIVW), 33 to 53 (IVRLLAWQGAALAAIPLLRGI), 59 to 79 (ALIAVGIAVLALRALVLPWLL), 103 to 123 (LLITAGLTLTAFAITQPVVNL), 126 to 146 (GVTINAVPAAFAVVLIALFVM), 157 to 177 (AGFLMLDNGIAATAFLLTAGV), and 179 to 199 (LIVELGASLDVLFAVIVIGVL).

It is found in the cell membrane. This is an uncharacterized protein from Mycobacterium tuberculosis (strain ATCC 25618 / H37Rv).